We begin with the raw amino-acid sequence, 336 residues long: Polyadenylate-binding protein-interacting protein 12 (336 aa).

The segment at 14–47 (EAGGLISPSPPSSVTSQESGASSNNDHGGNGIHD) is disordered. Residues 25 to 40 (SSVTSQESGASSNNDH) are compositionally biased toward polar residues. The short motif at 75 to 85 (KLNPMAKEFIP) is the PAM2-like element. The short motif at 122–134 (RRKKSFGQQGKRR) is the Bipartite nuclear localization signal element. RRM domains are found at residues 150 to 225 (RTVY…PSKT) and 247 to 323 (RTIY…PSKT).

As to quaternary structure, interacts with MPC. As to expression, expressed in roots, leaves, stems, flowers and siliques. Detected in flowers only in growing organs: gynoecium, petals, stamenal filaments, anther walls and ovules.

Its subcellular location is the nucleus. Functionally, binds nucleotic acids in vitro. The polypeptide is Polyadenylate-binding protein-interacting protein 12 (CID12) (Arabidopsis thaliana (Mouse-ear cress)).